A 422-amino-acid chain; its full sequence is MSGEAPRVAVDPFSCPMMTMQRKPEVHDAFREAGPVVEVNAPAGGPAWVITDDALAREVLADPRFVKDPDLAPTAWRGVDDGLDIPVPELRPFTLIAVDGEDHRRLRRIHAPAFNPRRLAERTDRIAAIADRLLTELADSSDRSGEPAELIGGFAYHFPLLVICELLGVPVTDPAMAREAVGVLKALGLGGPQSAGGDGTDPAGDVPDTSALESLLLEAVHAARRKDTRTMTRVLYERAQAEFGSVSDDQLVYMITGLIFAGHDTTGSFLGFLLAEVLAGRLAADADGDAISRFVEEALRHHPPVPYTLWRFAATEVVIRGVRLPRGAPVLVDIEGTNTDGRHHDAPHAFHPDRPSRRRLTFGDGPHYCIGEQLAQLESRTMIGVLRSRFPQARLAVPYEELRWCRKGAQTARLTDLPVWLR.

Cysteine 369 is a heme binding site.

Belongs to the cytochrome P450 family. Monomer. The cofactor is heme.

Its subcellular location is the cytoplasm. The catalysed reaction is 13-deoxydaunorubicin + NADPH + O2 + H(+) = 13-dihydrodaunorubicin + NADP(+) + H2O. It catalyses the reaction 13-dihydrodaunorubicin + NADPH + O2 + H(+) = daunorubicin + NADP(+) + 2 H2O. The enzyme catalyses 13-deoxycarminomycin + NADPH + O2 + H(+) = 13-dihydrocarminomycin + NADP(+) + H2O. It carries out the reaction 13-dihydrocarminomycin + NADPH + O2 + H(+) = carminomycin + NADP(+) + 2 H2O. The protein operates within antibiotic biosynthesis; daunorubicin biosynthesis. It functions in the pathway antibiotic biosynthesis; carminomycin biosynthesis. Strongly inhibited by dithiothreitol and high ionic strength buffers. Functionally, involved in the biosynthesis of the anthracyclines carminomycin and daunorubicin (daunomycin) which are aromatic polyketide antibiotics that exhibit high cytotoxicity and are widely applied in the chemotherapy of a variety of cancers. In vivo, DoxA catalyzes the C-13 hydroxylation of 13-deoxycarminomycin and 13-deoxydaunorubicin to yield 13-dihydrocarminomycin and 13-dihydrodaunorubicin, respectively, as well as the oxidation of these 13-dihydro-anthracyclines to their respective 13-keto forms, carminomycin and daunorubicin. In vitro, it also catalyzes the C-14 hydroxylation of daunorubicin to form doxorubicin (adriamycin), although this strain is not a doxorubicin producer. It is not able to accept anthracyclinones (aglycones) and anthracyclines with a 10-carbomethoxyl moiety. 13-oxidation of the anthracyclines possessing the 4-methoxy substitution is greatly favored. The anthracycline analog desacetyladriamycin can be oxidized to 10-hydroxydesacetyladriamycin. It can only use NADP. DoxA acts jointly with DauV. This Streptomyces sp. (strain C5) protein is Cytochrome P-450 monooxygenase DoxA (doxA).